The sequence spans 402 residues: Guanine nucleotide-binding protein subunit alpha-1 (402 aa).

Positions 1–12 (MGCSASKPSEPS) are enriched in polar residues. Residues 1–70 (MGCSASKPSE…PEPQKPAEPA (70 aa)) are disordered. Residue Gly-2 is the site of N-myristoyl glycine attachment. Cys-3 carries S-palmitoyl cysteine lipidation. Residues 23 to 33 (KKVEQVPEPKP) show a composition bias toward basic and acidic residues. Positions 34-69 (EPQPQPEPQPQPEPPKPAEPAPAPAPAPEPQKPAEP) are enriched in pro residues. Positions 82–402 (EAYGLLLCGA…FISDKYYQDA (321 aa)) constitute a G-alpha domain. The segment at 85 to 98 (GLLLCGAGESGKTT) is G1 motif. Positions 93, 94, 95, 96, 97, 98, 198, 223, 229, 251, 317, 318, 320, and 377 each coordinate GTP. Residue Thr-97 coordinates Mg(2+). Residues 221 to 229 (DVLRARIRS) are G2 motif. Ser-229 serves as a coordination point for Mg(2+). The segment at 244 to 253 (IRIFDVGGQK) is G3 motif. The G4 motif stretch occupies residues 313–320 (FLVCNKFD). The G5 motif stretch occupies residues 375-380 (IVALNG).

It belongs to the G-alpha family. As to quaternary structure, g proteins are composed of 3 units; alpha, beta and gamma. The alpha chain contains the guanine nucleotide binding site. The cofactor is Mg(2+).

It is found in the cytoplasm. The protein resides in the perinuclear region. The protein localises to the endomembrane system. Its function is as follows. Guanine nucleotide-binding proteins (G proteins) are involved as modulators or transducers in various transmembrane signaling systems. The polypeptide is Guanine nucleotide-binding protein subunit alpha-1 (GA1) (Trichomonas vaginalis).